A 918-amino-acid polypeptide reads, in one-letter code: Leucine--tRNA ligase (918 aa).

The 'HIGH' region signature appears at 40–51 (PYPSGVGLHVGH). A 'KMSKS' region motif is present at residues 692–696 (KMSKS). Lysine 695 lines the ATP pocket.

Belongs to the class-I aminoacyl-tRNA synthetase family.

The protein resides in the cytoplasm. The enzyme catalyses tRNA(Leu) + L-leucine + ATP = L-leucyl-tRNA(Leu) + AMP + diphosphate. The chain is Leucine--tRNA ligase from Azobacteroides pseudotrichonymphae genomovar. CFP2.